A 1029-amino-acid chain; its full sequence is Sodium/potassium-transporting ATPase subunit alpha-4 (1029 aa).

The segment at 1–37 (MGLWGKKGTVAPHDQSPRRRPKKGLIKKKMVKREKQK) is disordered. The Cytoplasmic portion of the chain corresponds to 1–95 (MGLWGKKGTV…NTVTPPPTTP (95 aa)). The span at 18 to 36 (RRRPKKGLIKKKMVKREKQ) shows a compositional bias: basic residues. Residues 90–92 (PPP) are interaction with phosphoinositide-3 kinase. The chain crosses the membrane as a helical span at residues 96-116 (EWVKFCKQLFGGFSLLLWTGA). At 117-139 (ILCFVAYSIQIYFNEEPTKDNLY) the chain is on the extracellular side. The helical transmembrane segment at 140–160 (LSIVLSVVVIVTGCFSYYQEA) threads the bilayer. The Cytoplasmic segment spans residues 161–296 (KSSKIMESFK…VGQTPIAAEI (136 aa)). A compositionally biased stretch (polar residues) spans 223 to 237 (NSSLTGESEPQSRSP). The interval 223–242 (NSSLTGESEPQSRSPDFTHE) is disordered. The chain crosses the membrane as a helical span at residues 297 to 316 (EHFIHLITVVAVFLGVTFFA). At 317 to 328 (LSLLLGYGWLEA) the chain is on the extracellular side. The helical transmembrane segment at 329–346 (IIFLIGIIVANVPEGLLA) threads the bilayer. Residues 347–778 (TVTVCLTLTA…EEGRLIFDNL (432 aa)) are Cytoplasmic-facing. The 4-aspartylphosphate intermediate role is filled by D384. Mg(2+) contacts are provided by D723 and D727. Residues 779–798 (KKSIMYTLTSNIPEITPFLM) form a helical membrane-spanning segment. The Extracellular portion of the chain corresponds to 799–808 (FIILGIPLPL). A helical transmembrane segment spans residues 809-829 (GTITILCIDLGTDMVPAISLA). Residues 830–849 (YESAESDIMKRLPRNPKTDN) lie on the Cytoplasmic side of the membrane. A helical membrane pass occupies residues 850 to 872 (LVNHRLIGMAYGQIGMIQALAGF). Residues 873 to 924 (FTYFVILAENGFRPVDLLGIRLHWEDKYLNDLEDSYGQQWTYEQRKVVEFTC) are Extracellular-facing. The helical transmembrane segment at 925-944 (QTAFFVTIVVVQWADLIISK) threads the bilayer. Residues 945–957 (TRRNSLFQQGMRN) are Cytoplasmic-facing. S949 bears the Phosphoserine; by PKA mark. A helical membrane pass occupies residues 958-976 (KVLIFGILEETLLAAFLSY). The Extracellular segment spans residues 977-991 (TPGMDVALRMYPLKI). Residues 992–1012 (TWWLCAIPYSILIFVYDEIRK) traverse the membrane as a helical segment. Residues 1013-1029 (LLIRQHPDGWVERETYY) are Cytoplasmic-facing.

The protein belongs to the cation transport ATPase (P-type) (TC 3.A.3) family. Type IIC subfamily. In terms of assembly, the sodium/potassium-transporting ATPase is composed of a catalytic alpha subunit, an auxiliary non-catalytic beta subunit and an additional regulatory subunit. In terms of tissue distribution, specifically expressed in testis. Found in very low levels in skeletal muscle. Expressed in mature sperm (at protein level).

It localises to the cell membrane. The enzyme catalyses K(+)(out) + Na(+)(in) + ATP + H2O = K(+)(in) + Na(+)(out) + ADP + phosphate + H(+). Its activity is regulated as follows. Specifically inhibited by an endogenous cardiac glycoside, ouabain. This is the catalytic component of the active enzyme, which catalyzes the hydrolysis of ATP coupled with the exchange of sodium and potassium ions across the plasma membrane. This action creates the electrochemical gradient of sodium and potassium ions, providing the energy for active transport of various nutrients. Plays a role in sperm motility. This is Sodium/potassium-transporting ATPase subunit alpha-4 from Homo sapiens (Human).